Reading from the N-terminus, the 1521-residue chain is Probable DNA topoisomerase 2 (1521 aa).

Over residues 1–10 (MSDSENDYSD) the composition is skewed to acidic residues. Residues 1–87 (MSDSENDYSD…DDKSSSSDNE (87 aa)) form a disordered region. Residues 36–48 (SKKKASATRKPAA) show a composition bias toward basic residues. Residues 49–62 (KKATTTTTSTTKKS) show a composition bias toward low complexity. ATP contacts are provided by residues Asn-163, Asn-192, 220–222 (SSH), and 233–240 (GRNGFGAK). The tract at residues 412-414 (NKK) is interaction with DNA. An ATP-binding site is contributed by 446 to 448 (QTK). A Toprim domain is found at 527–640 (CTLILTEGDS…TLLRMPGFLV (114 aa)). Positions 533, 609, and 611 each coordinate Mg(2+). The region spanning 771–1273 (IPNIVDGLKT…PIQEIYKRDL (503 aa)) is the Topo IIA-type catalytic domain. Tyr-861 acts as the O-(5'-phospho-DNA)-tyrosine intermediate in catalysis. Residues 1007–1047 (GTRKKKKEEKEKKAASRKGTKAKPTTTKRSKRVDDDDDNEK) form a disordered region. Residues 1021–1037 (ASRKGTKAKPTTTKRSK) show a composition bias toward basic residues. An interaction with DNA region spans residues 1085 to 1094 (KLVSTINETN). Disordered stretches follow at residues 1192-1222 (KIKKKKNAFDEEDAAISSDEEKDGAQEEQDD) and 1335-1521 (IPTT…SDSD). Acidic residues predominate over residues 1201-1222 (DEEDAAISSDEEKDGAQEEQDD). Residues 1354 to 1368 (TTSTSTSTTTSSNTK) are compositionally biased toward low complexity. Positions 1422–1438 (LSDESDQESDQESDQGS) are enriched in acidic residues. Low complexity predominate over residues 1454-1467 (PTTIATKKATTSKS). Positions 1468–1480 (KVIDDKSSDDEVI) are enriched in basic and acidic residues. A compositionally biased stretch (acidic residues) spans 1503–1521 (SDSDDDDLYDNEESSSDSD).

It belongs to the type II topoisomerase family. In terms of assembly, homodimer. Mg(2+) serves as cofactor. Requires Mn(2+) as cofactor. The cofactor is Ca(2+).

Its subcellular location is the nucleus. It catalyses the reaction ATP-dependent breakage, passage and rejoining of double-stranded DNA.. In terms of biological role, control of topological states of DNA by transient breakage and subsequent rejoining of DNA strands. Topoisomerase II makes double-strand breaks. This chain is Probable DNA topoisomerase 2 (top2), found in Dictyostelium discoideum (Social amoeba).